The following is an 82-amino-acid chain: Small ribosomal subunit protein bS18 (82 aa).

It belongs to the bacterial ribosomal protein bS18 family. As to quaternary structure, part of the 30S ribosomal subunit. Forms a tight heterodimer with protein bS6.

Functionally, binds as a heterodimer with protein bS6 to the central domain of the 16S rRNA, where it helps stabilize the platform of the 30S subunit. The sequence is that of Small ribosomal subunit protein bS18 from Sinorhizobium fredii (strain NBRC 101917 / NGR234).